The sequence spans 371 residues: Putative glutamate--cysteine ligase 2 (371 aa).

This sequence belongs to the glutamate--cysteine ligase type 2 family. YbdK subfamily.

It carries out the reaction L-cysteine + L-glutamate + ATP = gamma-L-glutamyl-L-cysteine + ADP + phosphate + H(+). In terms of biological role, ATP-dependent carboxylate-amine ligase which exhibits weak glutamate--cysteine ligase activity. The chain is Putative glutamate--cysteine ligase 2 from Cupriavidus necator (strain ATCC 17699 / DSM 428 / KCTC 22496 / NCIMB 10442 / H16 / Stanier 337) (Ralstonia eutropha).